The primary structure comprises 314 residues: tRNA dimethylallyltransferase (314 aa).

15–22 (GPTATGKS) provides a ligand contact to ATP. 17–22 (TATGKS) is a substrate binding site. The interaction with substrate tRNA stretch occupies residues 40–43 (DSML).

This sequence belongs to the IPP transferase family. As to quaternary structure, monomer. The cofactor is Mg(2+).

It catalyses the reaction adenosine(37) in tRNA + dimethylallyl diphosphate = N(6)-dimethylallyladenosine(37) in tRNA + diphosphate. Functionally, catalyzes the transfer of a dimethylallyl group onto the adenine at position 37 in tRNAs that read codons beginning with uridine, leading to the formation of N6-(dimethylallyl)adenosine (i(6)A). This Pelotomaculum thermopropionicum (strain DSM 13744 / JCM 10971 / SI) protein is tRNA dimethylallyltransferase.